A 244-amino-acid chain; its full sequence is NAD reductase coq12 (244 aa).

The interval 131-158 (NPLMNSEKNSTSVEDLPGSNRTQQTSSH) is disordered. The span at 132-158 (PLMNSEKNSTSVEDLPGSNRTQQTSSH) shows a compositional bias: polar residues.

The protein localises to the mitochondrion. It carries out the reaction a reduced flavin + NAD(+) = an oxidized flavin + NADH + 2 H(+). Its function is as follows. NADH-dependent flavin reductase that acts in the coenzyme Q biosynthetic pathway. Required for synthesis of the p-hydroxybenzoic acid (PHB) precursor to form a quinone backbone. The sequence is that of NAD reductase coq12 from Schizosaccharomyces pombe (strain 972 / ATCC 24843) (Fission yeast).